A 606-amino-acid chain; its full sequence is MGYVINIQAIKKQIELSPQSCGVYQMIGDKDKVLYVGKAKNLKSRLSNYLRYENLSERTKFMLSQVIKVEVLVTENEIDALLLEARLIKSLKPPYNIIFKDGRSYPYIVISKHNYPRIAQYRGKFKKGEFHYYGPFISVAAVKQTMLSLQKTFLLRVCSDQYFASTKRPCIEYQIKRCSAPCVGKITKDDYCQSVKQTRDTLLGRNEKVKKQLSSTMEKCSKEENYELAAIYRDRLKFLEQIQMQSMDFSFEKDADFFGIARKEDLACIGVLSFRNKDNYGSTPYFVENCSDHPDDEILSTFLIKLYNSANIPPAQIYVSDFVTGKEIIEQALHNVTHKPIKALHAKSKKEHNLLKFVYDNSQRSLEQKLTDYKNNLEKFEELSKIFLLPNIPKRVEVYDNSHTSGNQQVGVMVVAGKEGFLKSEYRKFTIKGEILGDDYEMMREVLTRRFSNNTKDVVPDFLLIDGGPGHISVVQNVLNTLNINVPFACMAKGSYRNAGNERFYMPNREDFTLKNDSKVMLYLQSLRNEAHRFAITSHRKKRDKQFFVSPLSKITSIGDKRKNALMSHFGSVENISKASLAEIQNVARISKELAEVILKHVDNKE.

Residues 19–97 form the GIY-YIG domain; sequence QSCGVYQMIG…IKSLKPPYNI (79 aa). A UVR domain is found at 207–242; that stretch reads EKVKKQLSSTMEKCSKEENYELAAIYRDRLKFLEQI.

The protein belongs to the UvrC family. In terms of assembly, interacts with UvrB in an incision complex.

It is found in the cytoplasm. Its function is as follows. The UvrABC repair system catalyzes the recognition and processing of DNA lesions. UvrC both incises the 5' and 3' sides of the lesion. The N-terminal half is responsible for the 3' incision and the C-terminal half is responsible for the 5' incision. In Wolbachia sp. subsp. Brugia malayi (strain TRS), this protein is UvrABC system protein C.